The following is a 580-amino-acid chain: Probable glucomannan 4-beta-mannosyltransferase 2 (580 aa).

The segment covering 1–12 has biased composition (polar residues); that stretch reads MSTNGGAPSQKR. The interval 1-33 is disordered; it reads MSTNGGAPSQKRSWLPSRPLLTTTTQTYPPPLL. Positions 15–27 are enriched in low complexity; that stretch reads LPSRPLLTTTTQT. Residues 85 to 105 form a helical membrane-spanning segment; that stretch reads AVWACLAMSAMLVAEAAWMGL. Aspartate 182 is an active-site residue. Substrate contacts are provided by aspartate 241 and aspartate 243. Aspartate 335 is an active-site residue. 4 helical membrane-spanning segments follow: residues 414-434, 437-457, 528-548, and 554-574; these read AIAPILTFLFYCIVIPLSAMV, VTIPVWGLVYIPTAITIMNAI, IYIPELLLALYLLICASYDFV, and YYIYIYLQAVAFTVMGFGFVG.

It belongs to the glycosyltransferase 2 family. Plant cellulose synthase-like A subfamily.

The protein localises to the golgi apparatus membrane. It carries out the reaction GDP-mannose + (glucomannan)n = GDP + (glucomannan)n+1.. Its function is as follows. Probable mannan synthase which consists of a 4-beta-mannosyltransferase activity on mannan using GDP-mannose. The beta-1,4-mannan product is the backbone for galactomannan synthesis by galactomannan galactosyltransferase. Galactomannan is a noncellulosic polysaccharides of plant cell wall. The sequence is that of Probable glucomannan 4-beta-mannosyltransferase 2 from Oryza sativa subsp. japonica (Rice).